A 128-amino-acid polypeptide reads, in one-letter code: uncharacterized protein (128 aa).

The HTH hxlR-type domain occupies cysteine 18–aspartate 116.

This is an uncharacterized protein from Bacillus subtilis (strain 168).